The sequence spans 183 residues: MSAITPYDWAIIAFVIGVTFLCVFMLTVPLLLGGKSWGRAKQEQFESGVVSAGGARIRLSAKFYLVAIFFVVFDLEALYLYAWATSVREVGWMGFTTMVIFVVDLLIALIYVFATGALTWSPSDRRKAAGIKPKIGSPNMNIAEITRFNSIEELVIDPTGHIPAQSSGRMKSKTSTAPSSKQE.

The next 3 membrane-spanning stretches (helical) occupy residues 11-31 (IIAF…VPLL), 63-83 (FYLV…LYAW), and 98-118 (MVIF…TGAL). A disordered region spans residues 160-183 (GHIPAQSSGRMKSKTSTAPSSKQE). Residues 164–183 (AQSSGRMKSKTSTAPSSKQE) are compositionally biased toward polar residues.

The protein belongs to the complex I subunit 3 family. NDH-1 is composed of 14 different subunits. Subunits NuoA, H, J, K, L, M, N constitute the membrane sector of the complex.

It is found in the cell inner membrane. The enzyme catalyses a quinone + NADH + 5 H(+)(in) = a quinol + NAD(+) + 4 H(+)(out). Its function is as follows. NDH-1 shuttles electrons from NADH, via FMN and iron-sulfur (Fe-S) centers, to quinones in the respiratory chain. The immediate electron acceptor for the enzyme in this species is believed to be ubiquinone. Couples the redox reaction to proton translocation (for every two electrons transferred, four hydrogen ions are translocated across the cytoplasmic membrane), and thus conserves the redox energy in a proton gradient. In Acinetobacter baylyi (strain ATCC 33305 / BD413 / ADP1), this protein is NADH-quinone oxidoreductase subunit A.